We begin with the raw amino-acid sequence, 286 residues long: ATP synthase gamma chain (286 aa).

It belongs to the ATPase gamma chain family. As to quaternary structure, F-type ATPases have 2 components, CF(1) - the catalytic core - and CF(0) - the membrane proton channel. CF(1) has five subunits: alpha(3), beta(3), gamma(1), delta(1), epsilon(1). CF(0) has three main subunits: a, b and c.

It is found in the cell inner membrane. In terms of biological role, produces ATP from ADP in the presence of a proton gradient across the membrane. The gamma chain is believed to be important in regulating ATPase activity and the flow of protons through the CF(0) complex. The chain is ATP synthase gamma chain from Pseudomonas putida (strain GB-1).